We begin with the raw amino-acid sequence, 153 residues long: Protein-export protein SecB (153 aa).

Belongs to the SecB family. Homotetramer, a dimer of dimers. One homotetramer interacts with 1 SecA dimer.

The protein resides in the cytoplasm. Functionally, one of the proteins required for the normal export of preproteins out of the cell cytoplasm. It is a molecular chaperone that binds to a subset of precursor proteins, maintaining them in a translocation-competent state. It also specifically binds to its receptor SecA. This is Protein-export protein SecB from Erwinia tasmaniensis (strain DSM 17950 / CFBP 7177 / CIP 109463 / NCPPB 4357 / Et1/99).